A 277-amino-acid polypeptide reads, in one-letter code: uncharacterized protein (277 aa).

Belongs to the BtpA family.

The protein resides in the mitochondrion. This is an uncharacterized protein from Caenorhabditis elegans.